The sequence spans 758 residues: Dolichyl-phosphooligosaccharide-protein glycotransferase 2 (758 aa).

The Cytoplasmic portion of the chain corresponds to 1-6; that stretch reads MKRRYS. Residues 7-27 form a helical membrane-spanning segment; the sequence is ILIILLVAIFYRMITFRFKYL. At 28–92 the chain is on the extracellular side; the sequence is LGYDPYFHLA…KVFGVSLTTT (65 aa). Positions 29-31 match the DXD motif 1 motif; sequence GYD. D31 is a Mn(2+) binding site. A helical transmembrane segment spans residues 93–113; that stretch reads FKITPVIFGVLTVIFLYLSLL. Topologically, residues 114-120 are cytoplasmic; that stretch reads KLYDEKR. The chain crosses the membrane as a helical span at residues 121-141; that stretch reads AFFGGFFLAISYGHVFRSMAN. The Extracellular segment spans residues 142 to 145; that stretch reads YYRG. Residues R144 and D146 each coordinate Mn(2+). The DXD motif 2 motif lies at 144–146; the sequence is RGD. Residues 146 to 166 traverse the membrane as a helical segment; it reads DNYMLFWYSVALLGISLALGI. Over 167–175 the chain is Cytoplasmic; the sequence is KKGKWKYKR. Helical transmembrane passes span 176-196 and 197-217; these read LIFY…WQAY and YPIF…AFIL. The Cytoplasmic segment spans residues 218–226; that stretch reads KKDKYLLDS. A helical membrane pass occupies residues 227-247; sequence IILILSTAFGVLLANYLGGIF. Residues 248-281 are Extracellular-facing; the sequence is GYGMLGYAKWLGKSVAKKLGLEFGYLKDVYLILH. Residues 282 to 302 traverse the membrane as a helical segment; that stretch reads LKYLVPISLSFVLVLILLGFL. The Cytoplasmic portion of the chain corresponds to 303–310; the sequence is TKDIRIRS. Residues 311-331 traverse the membrane as a helical segment; the sequence is LFLGIASFIGIIILFKRFEAL. The Extracellular portion of the chain corresponds to 332 to 352; the sequence is KELSTGFGIFKEAPILETQPT. Residues 340–343 carry the TIXE motif motif; the sequence is IFKE. The chain crosses the membrane as a helical span at residues 353 to 373; sequence SFKDLWAAFSLSFFLTPLFFI. The Cytoplasmic portion of the chain corresponds to 374–379; it reads RFKKPR. The chain crosses the membrane as a helical span at residues 380–400; the sequence is VEDFLTLGLIIPSVYMLKTWT. Position 401 (R401) is a topological domain, extracellular. Residue R401 coordinates a glycophospholipid. Residues 402–422 traverse the membrane as a helical segment; sequence FLFIGSMAIAIMSGIGIVELY. Over 423–433 the chain is Cytoplasmic; the sequence is EAIKPRLNGKK. Residues 434–454 form a helical membrane-spanning segment; that stretch reads ALATGIITLVILPGVIAGLSF. Over 455–758 the chain is Extracellular; the sequence is KEVCSLHPEM…DRGVFRLSYN (304 aa). Positions 488–490 are interacts with target acceptor peptide in protein substrate; sequence WWD. The WWDYG motif signature appears at 488 to 492; the sequence is WWDWG. The DK motif signature appears at 540-547; the sequence is DFLKFGAI.

It belongs to the STT3 family. It depends on Mn(2+) as a cofactor. Mg(2+) is required as a cofactor.

It is found in the cell membrane. It carries out the reaction an archaeal dolichyl phosphooligosaccharide + [protein]-L-asparagine = an archaeal dolichyl phosphate + a glycoprotein with the oligosaccharide chain attached by N-beta-D-glycosyl linkage to a protein L-asparagine.. It participates in protein modification; protein glycosylation. Its function is as follows. Oligosaccharyl transferase (OST) that catalyzes the initial transfer of a defined glycan (ManNAcXyl(2)GlcAMan(2)GalNAc in Pyrococcus) from the lipid carrier dolichol-monophosphate to an asparagine residue within an Asn-X-Ser/Thr consensus motif in nascent polypeptide chains, the first step in protein N-glycosylation. In Pyrococcus horikoshii (strain ATCC 700860 / DSM 12428 / JCM 9974 / NBRC 100139 / OT-3), this protein is Dolichyl-phosphooligosaccharide-protein glycotransferase 2 (aglB2).